The primary structure comprises 570 residues: Proline--tRNA ligase (570 aa).

It belongs to the class-II aminoacyl-tRNA synthetase family. ProS type 1 subfamily. As to quaternary structure, homodimer.

The protein localises to the cytoplasm. The catalysed reaction is tRNA(Pro) + L-proline + ATP = L-prolyl-tRNA(Pro) + AMP + diphosphate. In terms of biological role, catalyzes the attachment of proline to tRNA(Pro) in a two-step reaction: proline is first activated by ATP to form Pro-AMP and then transferred to the acceptor end of tRNA(Pro). As ProRS can inadvertently accommodate and process non-cognate amino acids such as alanine and cysteine, to avoid such errors it has two additional distinct editing activities against alanine. One activity is designated as 'pretransfer' editing and involves the tRNA(Pro)-independent hydrolysis of activated Ala-AMP. The other activity is designated 'posttransfer' editing and involves deacylation of mischarged Ala-tRNA(Pro). The misacylated Cys-tRNA(Pro) is not edited by ProRS. The protein is Proline--tRNA ligase (proS) of Aquifex aeolicus (strain VF5).